The primary structure comprises 226 residues: Phosphoribosylformylglycinamidine synthase subunit PurQ (226 aa).

Residues 4-226 (RIGVVTFPGS…TSILKKLVNA (223 aa)) enclose the Glutamine amidotransferase type-1 domain. Cys87 (nucleophile) is an active-site residue. Residues His196 and Glu198 contribute to the active site.

Part of the FGAM synthase complex composed of 1 PurL, 1 PurQ and 2 PurS subunits.

It is found in the cytoplasm. It catalyses the reaction N(2)-formyl-N(1)-(5-phospho-beta-D-ribosyl)glycinamide + L-glutamine + ATP + H2O = 2-formamido-N(1)-(5-O-phospho-beta-D-ribosyl)acetamidine + L-glutamate + ADP + phosphate + H(+). The catalysed reaction is L-glutamine + H2O = L-glutamate + NH4(+). It functions in the pathway purine metabolism; IMP biosynthesis via de novo pathway; 5-amino-1-(5-phospho-D-ribosyl)imidazole from N(2)-formyl-N(1)-(5-phospho-D-ribosyl)glycinamide: step 1/2. Its function is as follows. Part of the phosphoribosylformylglycinamidine synthase complex involved in the purines biosynthetic pathway. Catalyzes the ATP-dependent conversion of formylglycinamide ribonucleotide (FGAR) and glutamine to yield formylglycinamidine ribonucleotide (FGAM) and glutamate. The FGAM synthase complex is composed of three subunits. PurQ produces an ammonia molecule by converting glutamine to glutamate. PurL transfers the ammonia molecule to FGAR to form FGAM in an ATP-dependent manner. PurS interacts with PurQ and PurL and is thought to assist in the transfer of the ammonia molecule from PurQ to PurL. The sequence is that of Phosphoribosylformylglycinamidine synthase subunit PurQ from Streptomyces coelicolor (strain ATCC BAA-471 / A3(2) / M145).